Reading from the N-terminus, the 454-residue chain is tRNA modification GTPase MnmE (454 aa).

R23, E80, and K120 together coordinate (6S)-5-formyl-5,6,7,8-tetrahydrofolate. The TrmE-type G domain maps to 216–377; the sequence is GMKVVIAGRP…LRNHLKQSMG (162 aa). N226 contributes to the K(+) binding site. GTP is bound by residues 226 to 231, 245 to 251, 270 to 273, 335 to 338, and 358 to 360; these read NAGKSS, TDIAGTT, DTAG, NKAD, and SAR. Mg(2+) is bound at residue S230. Residues T245, I247, and T250 each contribute to the K(+) site. Position 251 (T251) interacts with Mg(2+). K454 provides a ligand contact to (6S)-5-formyl-5,6,7,8-tetrahydrofolate.

This sequence belongs to the TRAFAC class TrmE-Era-EngA-EngB-Septin-like GTPase superfamily. TrmE GTPase family. As to quaternary structure, homodimer. Heterotetramer of two MnmE and two MnmG subunits. K(+) is required as a cofactor.

It localises to the cytoplasm. In terms of biological role, exhibits a very high intrinsic GTPase hydrolysis rate. Involved in the addition of a carboxymethylaminomethyl (cmnm) group at the wobble position (U34) of certain tRNAs, forming tRNA-cmnm(5)s(2)U34. In Enterobacter sp. (strain 638), this protein is tRNA modification GTPase MnmE.